Consider the following 100-residue polypeptide: NADH-quinone oxidoreductase subunit K (100 aa).

The next 3 helical transmembrane spans lie at 4 to 24 (LTHG…GLVI), 28 to 48 (LLFM…AFVV), and 60 to 80 (VMYI…LALL).

This sequence belongs to the complex I subunit 4L family. In terms of assembly, NDH-1 is composed of 13 different subunits. Subunits NuoA, H, J, K, L, M, N constitute the membrane sector of the complex.

It localises to the cell inner membrane. The enzyme catalyses a quinone + NADH + 5 H(+)(in) = a quinol + NAD(+) + 4 H(+)(out). NDH-1 shuttles electrons from NADH, via FMN and iron-sulfur (Fe-S) centers, to quinones in the respiratory chain. The immediate electron acceptor for the enzyme in this species is believed to be ubiquinone. Couples the redox reaction to proton translocation (for every two electrons transferred, four hydrogen ions are translocated across the cytoplasmic membrane), and thus conserves the redox energy in a proton gradient. This Salmonella agona (strain SL483) protein is NADH-quinone oxidoreductase subunit K.